A 159-amino-acid chain; its full sequence is Putative pre-16S rRNA nuclease (159 aa).

This sequence belongs to the YqgF nuclease family.

It localises to the cytoplasm. Could be a nuclease involved in processing of the 5'-end of pre-16S rRNA. The protein is Putative pre-16S rRNA nuclease of Synechococcus sp. (strain JA-3-3Ab) (Cyanobacteria bacterium Yellowstone A-Prime).